Here is a 287-residue protein sequence, read N- to C-terminus: Putative sugar uptake protein spyM18_2243 (287 aa).

Transmembrane regions (helical) follow at residues 4–26, 33–50, 55–72, 85–107, 117–134, 154–171, 181–200, 207–229, 234–256, and 268–285; these read IFYA…KIGG, LGMT…WLIV, TLQL…WSIG, VSVA…GVLV, FVVG…FYFS, FRAL…AVLF, SVIL…FMSF, YVIK…LLAA, LAIA…ILFL, and VVTG…LGVV.

Belongs to the GRP transporter (TC 2.A.7.5) family.

The protein localises to the cell membrane. This is Putative sugar uptake protein spyM18_2243 from Streptococcus pyogenes serotype M18 (strain MGAS8232).